A 223-amino-acid polypeptide reads, in one-letter code: Protein NrfC (223 aa).

The tat-type signal signal peptide spans 1–27 (MTWSRRQFLTGVGVLAAVSGTAGRVVA). 3 consecutive 4Fe-4S ferredoxin-type domains span residues 37-65 (YGMV…VPEG), 83-114 (VKYR…RDAA), and 116-145 (GIVD…IHPV). Residues C46, C49, C52, C56, C92, C95, C100, C104, C125, C128, C131, C135, C152, C155, C168, and C172 each coordinate [4Fe-4S] cluster.

In terms of processing, predicted to be exported by the Tat system. The position of the signal peptide cleavage has not been experimentally proven.

In terms of biological role, probably involved in the transfer of electrons from the quinone pool to the type-c cytochromes. In Escherichia coli O157:H7, this protein is Protein NrfC (nrfC).